The primary structure comprises 98 residues: Large ribosomal subunit protein uL23 (98 aa).

This sequence belongs to the universal ribosomal protein uL23 family. As to quaternary structure, part of the 50S ribosomal subunit. Contacts protein L29, and trigger factor when it is bound to the ribosome.

One of the early assembly proteins it binds 23S rRNA. One of the proteins that surrounds the polypeptide exit tunnel on the outside of the ribosome. Forms the main docking site for trigger factor binding to the ribosome. This Caulobacter sp. (strain K31) protein is Large ribosomal subunit protein uL23.